The sequence spans 1573 residues: MSSLLERLHSKYSQNRPWPETIKLVRQIMEKRTGMMSGSHQHLVSCLETLQKALKVSSLSAMTDRLESIARQNGLTSHLSPNGTECYITTDMFYLEVLLDTEGQLCDVKVAHHRENPVSCPELVEQLREKNFEDFSQHLKGLVNLYKVPGDNKLETKMYLALQSLELDLTKMAAMYWQATNASVLEKILHGTVGYLTPRSGGQVMSLKYYVSPYDLFDDTTGASISLSEGHAVPRSLGMNVSVTIEATSAMYKLPIAPLIMGSHPIDNKGTPSFTSITNANSVDLPACFFLKFPQPIPVSRAFIQKIQHCTGIPLIDGSHTFLPHYELVTQFELAKEKEPGTLNHNMRFYASLPGQQHCYFVNKDAPLPDGRSLQGTLLSKIPFQHPGRVPIILSLIRHQVACNTLIGSCVKRTMLKEDCPGLLQFEVAPLSDSCFSISFQHPVNDSLVCVVMDVQDSSHVSCKLYKGLSDALICTDDFITKVVQRCMSIPVTMRAIRRKAETIQADTPALSLIAETVEDMVKKNLPPASSPGYGMASGSTALSGITTPTSSYTSGQISSLFNMGIKERHDSAGHGDDFSKVTQNPILTSLLQITSNSGGTLGSSPTPPQHTPPPASSPASNTKNHPMLMNLLKDNPAQDFSTLYGGSPLERQNSSGSPRTELGSSASGKPKKKRPRTGTEKMKNQTEDDFQRELFSMDVDSQNTIFDVGMAGDALDTPHITPAPSQCGTPPNVYQQAIPHTQANMQRMVRIPSTDAIIPDVTDILSDIAEEASKLPGPGEDCPNLGTPVRDSSSSGHSQSTLFDTDVFQVDGGGGSGGENPYPDPVDLIVDSHGSPNSDSPNTFFNSVDFNPDLLNSQSQSGFTDDLNDDSSQSGDNDFKDFAGPGLASLGIVSGLPVDGGDGKYKMALGADTVDFSIIAGGGSKNLGGPDIQETQSRSQSPLLGSDLGKDRPQKQKVKESGNGGGAGGGLSGMQSAGMEGKSMKRSRTPSSDGKSKDKPPKRKKTESDGKSPSHITNRPFTPPTSTGGSKSPGTSGRSQTPPGMATPPIPKITIQIPKGTMSVGKPSSHSQYSSSGSSSSSSSKSHHGHSSLSSSASGKIKSNKSDGSSGMKIGSSGGGMYSGQSGQSNSQSKNSSQSMGKAGSSPITKHGLSSNVNNSSGSKTKPQGKPSVLMNPSLSKPNISPSHSRPSGGSDKLSSPMKPMPGTPPSSKAKSPIGSGGQHLSGSGSNSTTKSSSGLVSSGSLTQKPNSSSSSSSSSSSSSSSSSSSSSSFSSGVSQNLHSSSKGKSPSRNKKPSLTAVIDKLKHGVGTGGPGSEDPMDGGVGGGSTGAPSHGMSSKHGLGVGEFPTKREKGEKDKSKGSSGGPSDPSKKGGGDSKGSVSTGVAKIIISKHDGGSPSIKAKVTLQKPEGGGEGLRSQMQKNYGSPLISGSTPKHERCSPSHNKSPAYTPQALDSESESGSSSIAEKSYQNSPSSDDGGGSGSRAQTEYSAEKHKKHKKEKKRLKDKDRDREKKKSYTMKPESWSKSPISADPTMAMGGGAMMSSDRASRPTPSFLMGDDDDLIDVPLTL.

Residues L588–L592 carry the LXXLL motif 1 motif. Disordered regions lie at residues T595–F691, S774–F883, and L928–D1564. Residues P606 to S617 show a composition bias toward pro residues. The short motif at L629–L633 is the LXXLL motif 2 element. Over residues E651–S668 the composition is skewed to polar residues. Residues T678–F691 show a composition bias toward basic and acidic residues. 3 stretches are compositionally biased toward polar residues: residues R791 to F804, G835 to F864, and Q934 to L944. Positions L949 to E961 are enriched in basic and acidic residues. Over residues G963–S973 the composition is skewed to gly residues. Low complexity-rich tracts occupy residues P1025–G1038, K1053–S1085, S1092–G1116, S1124–K1143, and S1155–S1164. Positions M1176–S1193 are enriched in polar residues. Over residues L1226–S1277 the composition is skewed to low complexity. The segment covering G1278 to K1290 has biased composition (polar residues). The span at P1350–K1362 shows a compositional bias: basic and acidic residues. Composition is skewed to polar residues over residues S1420–T1435 and P1443–D1457. The span at E1461–S1471 shows a compositional bias: low complexity. The segment covering K1496 to K1505 has biased composition (basic residues). The span at R1506–K1518 shows a compositional bias: basic and acidic residues.

It belongs to the Mediator complex subunit 1 family. In terms of assembly, component of the Mediator complex.

The protein localises to the nucleus. Its function is as follows. Component of the Mediator complex, a coactivator involved in the regulated transcription of nearly all RNA polymerase II-dependent genes. Mediator functions as a bridge to convey information from gene-specific regulatory proteins to the basal RNA polymerase II transcription machinery. Mediator is recruited to promoters by direct interactions with regulatory proteins and serves as a scaffold for the assembly of a functional preinitiation complex with RNA polymerase II and the general transcription factors. This Xenopus tropicalis (Western clawed frog) protein is Mediator of RNA polymerase II transcription subunit 1 (med1).